Reading from the N-terminus, the 300-residue chain is Tyrosine recombinase XerC (300 aa).

Positions 2 to 87 constitute a Core-binding (CB) domain; sequence TSLSPLLEKF…SIKSFYKYLV (86 aa). The 187-residue stretch at 108–294 folds into the Tyr recombinase domain; it reads TLPKVLPVEE…TWEQLQQVYD (187 aa). Residues Arg-148, Lys-172, His-246, Arg-249, and His-272 contribute to the active site. The O-(3'-phospho-DNA)-tyrosine intermediate role is filled by Tyr-281.

Belongs to the 'phage' integrase family. XerC subfamily. In terms of assembly, forms a cyclic heterotetrameric complex composed of two molecules of XerC and two molecules of XerD.

The protein localises to the cytoplasm. Site-specific tyrosine recombinase, which acts by catalyzing the cutting and rejoining of the recombining DNA molecules. The XerC-XerD complex is essential to convert dimers of the bacterial chromosome into monomers to permit their segregation at cell division. It also contributes to the segregational stability of plasmids. In Myxococcus xanthus, this protein is Tyrosine recombinase XerC.